Reading from the N-terminus, the 320-residue chain is Acetyl-coenzyme A carboxylase carboxyl transferase subunit beta (320 aa).

The 270-residue stretch at 25 to 294 (VWTKCDSCGQ…AKDEDELLGE (270 aa)) folds into the CoA carboxyltransferase N-terminal domain. Zn(2+) is bound by residues Cys29, Cys32, Cys48, and Cys51. A C4-type zinc finger spans residues 29–51 (CDSCGQVLYRAELERNLEVCPKC). Residues 295–310 (EMIADDIESSDNEPEI) are compositionally biased toward acidic residues. Positions 295 to 320 (EMIADDIESSDNEPEINIETNKKEDV) are disordered.

Belongs to the AccD/PCCB family. Acetyl-CoA carboxylase is a heterohexamer composed of biotin carboxyl carrier protein (AccB), biotin carboxylase (AccC) and two subunits each of ACCase subunit alpha (AccA) and ACCase subunit beta (AccD). The cofactor is Zn(2+).

It localises to the cytoplasm. It carries out the reaction N(6)-carboxybiotinyl-L-lysyl-[protein] + acetyl-CoA = N(6)-biotinyl-L-lysyl-[protein] + malonyl-CoA. It participates in lipid metabolism; malonyl-CoA biosynthesis; malonyl-CoA from acetyl-CoA: step 1/1. Component of the acetyl coenzyme A carboxylase (ACC) complex. Biotin carboxylase (BC) catalyzes the carboxylation of biotin on its carrier protein (BCCP) and then the CO(2) group is transferred by the transcarboxylase to acetyl-CoA to form malonyl-CoA. This Proteus mirabilis (strain HI4320) protein is Acetyl-coenzyme A carboxylase carboxyl transferase subunit beta.